A 992-amino-acid polypeptide reads, in one-letter code: Aminopeptidase Q (992 aa).

Topologically, residues 2 to 13 (GPPSSSGFYVSR) are cytoplasmic. The chain crosses the membrane as a helical; Signal-anchor for type II membrane protein span at residues 14-34 (AVALLLAALAAALLLALAVLA). The Extracellular portion of the chain corresponds to 35–992 (ALYGRCARVQ…RMTAWLRKNT (958 aa)). The tract at residues 48–92 (LHHGGVPDAASSPRGTQEEQLPTWPPRPTREPAGTATPGHWRPPG) is disordered. N-linked (GlcNAc...) asparagine glycosylation is present at asparagine 133. Glutamate 241 provides a ligand contact to substrate. Asparagine 262, asparagine 289, asparagine 347, and asparagine 361 each carry an N-linked (GlcNAc...) asparagine glycan. 380–384 (SAMEN) provides a ligand contact to substrate. Histidine 416 contributes to the Zn(2+) binding site. Residue glutamate 417 is the Proton acceptor of the active site. Residues histidine 420 and glutamate 439 each contribute to the Zn(2+) site. Asparagine 489 carries an N-linked (GlcNAc...) asparagine glycan. Catalysis depends on tyrosine 505, which acts as the Proton donor. N-linked (GlcNAc...) asparagine glycosylation is found at asparagine 584, asparagine 602, asparagine 609, asparagine 655, asparagine 811, asparagine 850, and asparagine 889.

Belongs to the peptidase M1 family. Zn(2+) is required as a cofactor. In terms of tissue distribution, expressed in skin. Expression levels do not differ between dark and light skin areas.

It is found in the membrane. In terms of biological role, metalloprotease which may be important for placentation by regulating biological activity of key peptides at the embryo-maternal interface. Involved in coat pigmentation patterns. During skin development, may be required to establish the periodicity of tabby markings, initiating a pre-pattern at or before hair follicle development. This is Aminopeptidase Q (LVRN) from Acinonyx jubatus (Cheetah).